Consider the following 260-residue polypeptide: Adenosylcobinamide-GDP ribazoletransferase (260 aa).

The next 6 membrane-spanning stretches (helical) occupy residues 43 to 63, 64 to 84, 117 to 137, 143 to 163, 197 to 217, and 237 to 257; these read LVGT…QFIF, PASV…GGFH, GSLA…ELAL, VAGG…SIIF, VICL…TLFV, and TLGA…LLLW.

It belongs to the CobS family. Requires Mg(2+) as cofactor.

The protein localises to the cell inner membrane. It catalyses the reaction alpha-ribazole + adenosylcob(III)inamide-GDP = adenosylcob(III)alamin + GMP + H(+). It carries out the reaction alpha-ribazole 5'-phosphate + adenosylcob(III)inamide-GDP = adenosylcob(III)alamin 5'-phosphate + GMP + H(+). The protein operates within cofactor biosynthesis; adenosylcobalamin biosynthesis; adenosylcobalamin from cob(II)yrinate a,c-diamide: step 7/7. Joins adenosylcobinamide-GDP and alpha-ribazole to generate adenosylcobalamin (Ado-cobalamin). Also synthesizes adenosylcobalamin 5'-phosphate from adenosylcobinamide-GDP and alpha-ribazole 5'-phosphate. In Shewanella amazonensis (strain ATCC BAA-1098 / SB2B), this protein is Adenosylcobinamide-GDP ribazoletransferase.